We begin with the raw amino-acid sequence, 501 residues long: Putative BTB/POZ domain-containing protein L107 (501 aa).

Residues 16–87 (TDLELTLVDS…FYITDIERSQ (72 aa)) form the BTB domain.

This sequence belongs to the mimivirus BTB/WD family.

The sequence is that of Putative BTB/POZ domain-containing protein L107 from Acanthamoeba polyphaga mimivirus (APMV).